The primary structure comprises 475 residues: Aspartyl/glutamyl-tRNA(Asn/Gln) amidotransferase subunit B (475 aa).

Belongs to the GatB/GatE family. GatB subfamily. In terms of assembly, heterotrimer of A, B and C subunits.

The catalysed reaction is L-glutamyl-tRNA(Gln) + L-glutamine + ATP + H2O = L-glutaminyl-tRNA(Gln) + L-glutamate + ADP + phosphate + H(+). It carries out the reaction L-aspartyl-tRNA(Asn) + L-glutamine + ATP + H2O = L-asparaginyl-tRNA(Asn) + L-glutamate + ADP + phosphate + 2 H(+). In terms of biological role, allows the formation of correctly charged Asn-tRNA(Asn) or Gln-tRNA(Gln) through the transamidation of misacylated Asp-tRNA(Asn) or Glu-tRNA(Gln) in organisms which lack either or both of asparaginyl-tRNA or glutaminyl-tRNA synthetases. The reaction takes place in the presence of glutamine and ATP through an activated phospho-Asp-tRNA(Asn) or phospho-Glu-tRNA(Gln). The chain is Aspartyl/glutamyl-tRNA(Asn/Gln) amidotransferase subunit B from Macrococcus caseolyticus (strain JCSC5402) (Macrococcoides caseolyticum).